The primary structure comprises 260 residues: Global transcriptional regulator CodY (260 aa).

The interval 1–159 (MPNLLEKTRK…SSTVVGIQLL (159 aa)) is GAF domain. The segment at residues 207 to 226 (ASVIADRIGITRSVIVNALR) is a DNA-binding region (H-T-H motif).

It belongs to the CodY family.

It is found in the cytoplasm. Functionally, DNA-binding global transcriptional regulator which is involved in the adaptive response to starvation and acts by directly or indirectly controlling the expression of numerous genes in response to nutrient availability. During rapid exponential growth, CodY is highly active and represses genes whose products allow adaptation to nutrient depletion. The protein is Global transcriptional regulator CodY of Streptococcus uberis (strain ATCC BAA-854 / 0140J).